The sequence spans 370 residues: MLEFNNSTPLTMGVELELQIVNRRDYNLTRGSSDLLVIIDKTDHGYDIKPEITESMIEIATSVHTDHKEMLAELTAMRTLLISAADKLNLGLAGGGAHPFQHWEDQRIYPTDRYRLVSELYGYLAKQFTVYGQHIHIGCATGDEAIRLAHMLARYIPHFITMSASSPFYQGVDTTFQSSRLTSINAFPLSGYMPFVTDWDSFNAYFDKMSSLGIVASMKDFYWDIRPKPEYGTVEIRVCDTPLSIEVAVALAGYAQTLSKFFFAQQELKPAQDTYLTYSYNRFQACRFGLNGALINPINGTQTSIKEDILQTFEMLADIAQELGTTEAIELLRQRIQAGQSDADWLRASYEKSGSLSDVVRQQSAVWMAR.

It belongs to the glutamate--cysteine ligase type 2 family. YbdK subfamily.

It carries out the reaction L-cysteine + L-glutamate + ATP = gamma-L-glutamyl-L-cysteine + ADP + phosphate + H(+). In terms of biological role, ATP-dependent carboxylate-amine ligase which exhibits weak glutamate--cysteine ligase activity. This is Putative glutamate--cysteine ligase 2 from Janthinobacterium sp. (strain Marseille) (Minibacterium massiliensis).